The following is a 374-amino-acid chain: 4-hydroxy-3-methylbut-2-en-1-yl diphosphate synthase (flavodoxin) (374 aa).

Positions 268, 271, 303, and 310 each coordinate [4Fe-4S] cluster.

This sequence belongs to the IspG family. Requires [4Fe-4S] cluster as cofactor.

The enzyme catalyses (2E)-4-hydroxy-3-methylbut-2-enyl diphosphate + oxidized [flavodoxin] + H2O + 2 H(+) = 2-C-methyl-D-erythritol 2,4-cyclic diphosphate + reduced [flavodoxin]. It participates in isoprenoid biosynthesis; isopentenyl diphosphate biosynthesis via DXP pathway; isopentenyl diphosphate from 1-deoxy-D-xylulose 5-phosphate: step 5/6. Its function is as follows. Converts 2C-methyl-D-erythritol 2,4-cyclodiphosphate (ME-2,4cPP) into 1-hydroxy-2-methyl-2-(E)-butenyl 4-diphosphate. The chain is 4-hydroxy-3-methylbut-2-en-1-yl diphosphate synthase (flavodoxin) from Geobacillus thermodenitrificans (strain NG80-2).